A 169-amino-acid chain; its full sequence is MADSKKPAIKKPVPKGDRKANRRGAARLAAVQALYQMDIGGAGINETFAEFESHWIGNEVEGDQYLPAEAAFFRDVVSGVVRDQKKLDPLIDDALAKGWPLARIDAILRAVMRAGAYELEHRKDIPARVVVSEYVDVAHAFVEKDETGMVNAVLDQIARQFREDEFTRG.

Residues 1–23 (MADSKKPAIKKPVPKGDRKANRR) form a disordered region.

The protein belongs to the NusB family.

Functionally, involved in transcription antitermination. Required for transcription of ribosomal RNA (rRNA) genes. Binds specifically to the boxA antiterminator sequence of the ribosomal RNA (rrn) operons. The sequence is that of Transcription antitermination protein NusB from Rhodopseudomonas palustris (strain HaA2).